Reading from the N-terminus, the 64-residue chain is MSLSYLDLLLAFGCVLAVSVIVNCFLVSHNNCVIEITGEAVRISGCTFDRTFVELVKGLKPARH.

The Lumenal segment spans residues 1–7 (MSLSYLD). Residues 8–28 (LLLAFGCVLAVSVIVNCFLVS) form a helical membrane-spanning segment. Residues 29 to 64 (HNNCVIEITGEAVRISGCTFDRTFVELVKGLKPARH) are Cytoplasmic-facing.

It belongs to the Tymovirales TGBp3 protein family.

The protein localises to the host endoplasmic reticulum membrane. In terms of biological role, plays a role in viral cell-to-cell propagation, by facilitating genome transport to neighboring plant cells through plasmosdesmata. May induce the formation of granular vesicles derived from the Endoplasmic reticulum, which align on actin filaments. The sequence is that of Movement protein TGBp3 from Chrysanthemum morifolium (Florist's daisy).